The sequence spans 103 residues: Small ribosomal subunit protein uS10 (103 aa).

It belongs to the universal ribosomal protein uS10 family. In terms of assembly, part of the 30S ribosomal subunit.

Involved in the binding of tRNA to the ribosomes. The polypeptide is Small ribosomal subunit protein uS10 (Neisseria gonorrhoeae (strain NCCP11945)).